Reading from the N-terminus, the 325-residue chain is Protease HtpX homolog (325 aa).

A helical transmembrane segment spans residues 20–40; that stretch reads IGYLLGGGGGMMIALVIAVAM. H130 is a Zn(2+) binding site. The active site involves E131. Zn(2+) is bound at residue H134. Transmembrane regions (helical) follow at residues 145–165 and 173–193; these read IVATLAGAISMLGNFAFFLGG and VMGVVGTLLAMIVAPFGAMIV. E202 lines the Zn(2+) pocket. The segment at 288–325 is disordered; the sequence is AMTARAAAPSQNSGPWGQRSDNAGGNSNGGSRYRGPWS. Residues 306–325 are compositionally biased toward low complexity; that stretch reads RSDNAGGNSNGGSRYRGPWS.

This sequence belongs to the peptidase M48B family. Requires Zn(2+) as cofactor.

It is found in the cell inner membrane. The chain is Protease HtpX homolog from Brucella abortus (strain S19).